Consider the following 566-residue polypeptide: MLMKVSQFFLATVKETPADAVLASHQLMIRAGMLRKLASGLYTWLPLGLRVLQKVADVVREEMNRAGALELLMPIVQPASLWQESGRWEAYGAELLRIMDRHQNGFCFGPTHEEVITDIARQELKSYKQLPLNFYQIQTKFRDEIRPRFGVMRSREFLMKDAYSFDLDEKGMQAAYEKMFDAYRRIFTRLGLNFRAVLADTGAIGGDYSHEFQVLADVGEDTVVYSDESDYAANIEKAAAQAPQGERVKPVAEMKKIATPGVRTIKQLADKANILPEKGVKTLIVKGDESSLIALILRGDHELNDVKAQHLPGVAFPLQFADEKEIREAIGCGPGSLGPVNLPIPFIVDRDAAQLVDFSCGANEDDFHWINVNWERDVPLGSVADIRKVVEGDISPDGKGRLRFARGIEVGQVFQLGDKYSRKMNATVVDELGKSRYLQMGCYGIGVSRTVAAAIEQNHDERGIIWPMPMAPFFIALVPVNMHKSYRVREACEKLYNELIDAGYEVLWDDRKERPGVMFADMDLIGIPHRLVISESGLDRGIVEYKARKSKEAENVSLENVLSVFR.

The protein belongs to the class-II aminoacyl-tRNA synthetase family. ProS type 1 subfamily. In terms of assembly, homodimer.

The protein resides in the cytoplasm. It catalyses the reaction tRNA(Pro) + L-proline + ATP = L-prolyl-tRNA(Pro) + AMP + diphosphate. Its function is as follows. Catalyzes the attachment of proline to tRNA(Pro) in a two-step reaction: proline is first activated by ATP to form Pro-AMP and then transferred to the acceptor end of tRNA(Pro). As ProRS can inadvertently accommodate and process non-cognate amino acids such as alanine and cysteine, to avoid such errors it has two additional distinct editing activities against alanine. One activity is designated as 'pretransfer' editing and involves the tRNA(Pro)-independent hydrolysis of activated Ala-AMP. The other activity is designated 'posttransfer' editing and involves deacylation of mischarged Ala-tRNA(Pro). The misacylated Cys-tRNA(Pro) is not edited by ProRS. The polypeptide is Proline--tRNA ligase (Coxiella burnetii (strain RSA 493 / Nine Mile phase I)).